The chain runs to 366 residues: MKRRDVGSLFAGARVAESVPLAPLTTLRVGPVARTLVTCDTTDQVVGVLRELDDRARNGDCGPVLVFAGGSNVVIGDALADLTVVRVANDRVTVDGNLVRAEAGTVWDEVVVATIERGLGGLECLSGIPGSAGATPVQNVGAYGVEVSDVITRVRLLDRSTGDVSWVPAADLSFGYRTSVLKQAEGLALPAVVLEVEFALDASGRSAPLRYGELTAALGMNSGERGEPRAVRDAVLALRTRKGMVLDAADHDTWSVGSFFTNPVVAPEIYERLAAQTGESVPHYPAPDGVKLAAGWLLERAGFGKGYPGDPHARCRLSSKHALALTNRGGATAADVMVLARTVRDGVRDVFGITLKPEPVLVGCAL.

Residues V29–S203 enclose the FAD-binding PCMH-type domain. The active site involves R177. The active-site Proton donor is S258. E358 is a catalytic residue.

Belongs to the MurB family. The cofactor is FAD.

The protein localises to the cytoplasm. The catalysed reaction is UDP-N-acetyl-alpha-D-muramate + NADP(+) = UDP-N-acetyl-3-O-(1-carboxyvinyl)-alpha-D-glucosamine + NADPH + H(+). The protein operates within cell wall biogenesis; peptidoglycan biosynthesis. Cell wall formation. The sequence is that of UDP-N-acetylenolpyruvoylglucosamine reductase from Mycobacterium ulcerans (strain Agy99).